A 467-amino-acid polypeptide reads, in one-letter code: UDP-N-acetylmuramate--L-alanine ligase (467 aa).

114–120 is an ATP binding site; that stretch reads GTHGKTT.

The protein belongs to the MurCDEF family.

The protein resides in the cytoplasm. The catalysed reaction is UDP-N-acetyl-alpha-D-muramate + L-alanine + ATP = UDP-N-acetyl-alpha-D-muramoyl-L-alanine + ADP + phosphate + H(+). It functions in the pathway cell wall biogenesis; peptidoglycan biosynthesis. Its function is as follows. Cell wall formation. The polypeptide is UDP-N-acetylmuramate--L-alanine ligase (Bradyrhizobium sp. (strain BTAi1 / ATCC BAA-1182)).